The sequence spans 389 residues: Succinate--CoA ligase [ADP-forming] subunit beta (389 aa).

The 236-residue stretch at 9 to 244 (KQLLAEYGIP…KTQEDETEVT (236 aa)) folds into the ATP-grasp domain. ATP-binding positions include Lys46, 53-55 (GRG), Gly102, and Glu107. Mg(2+)-binding residues include Asn199 and Asp213. Residues Asn264 and 321-323 (GIV) each bind substrate.

The protein belongs to the succinate/malate CoA ligase beta subunit family. Heterotetramer of two alpha and two beta subunits. Requires Mg(2+) as cofactor.

The enzyme catalyses succinate + ATP + CoA = succinyl-CoA + ADP + phosphate. The catalysed reaction is GTP + succinate + CoA = succinyl-CoA + GDP + phosphate. Its pathway is carbohydrate metabolism; tricarboxylic acid cycle; succinate from succinyl-CoA (ligase route): step 1/1. Succinyl-CoA synthetase functions in the citric acid cycle (TCA), coupling the hydrolysis of succinyl-CoA to the synthesis of either ATP or GTP and thus represents the only step of substrate-level phosphorylation in the TCA. The beta subunit provides nucleotide specificity of the enzyme and binds the substrate succinate, while the binding sites for coenzyme A and phosphate are found in the alpha subunit. The chain is Succinate--CoA ligase [ADP-forming] subunit beta from Xanthomonas campestris pv. campestris (strain 8004).